Here is a 284-residue protein sequence, read N- to C-terminus: Hypersensitive-induced response protein 1 (284 aa).

Gly-2 carries the N-myristoyl glycine lipid modification.

Interacts with LRR1.

The protein localises to the cell membrane. Positive regulator of hypersensitive response (HR)-like cell death. May be involved in potassium ion channel regulation. In Oryza sativa subsp. japonica (Rice), this protein is Hypersensitive-induced response protein 1.